The sequence spans 203 residues: ATP-dependent Clp protease proteolytic subunit 1 (203 aa).

The active-site Nucleophile is the Ser102. His127 is an active-site residue.

This sequence belongs to the peptidase S14 family. Fourteen ClpP subunits assemble into 2 heptameric rings which stack back to back to give a disk-like structure with a central cavity, resembling the structure of eukaryotic proteasomes.

The protein resides in the cytoplasm. The enzyme catalyses Hydrolysis of proteins to small peptides in the presence of ATP and magnesium. alpha-casein is the usual test substrate. In the absence of ATP, only oligopeptides shorter than five residues are hydrolyzed (such as succinyl-Leu-Tyr-|-NHMec, and Leu-Tyr-Leu-|-Tyr-Trp, in which cleavage of the -Tyr-|-Leu- and -Tyr-|-Trp bonds also occurs).. Functionally, cleaves peptides in various proteins in a process that requires ATP hydrolysis. Has a chymotrypsin-like activity. Plays a major role in the degradation of misfolded proteins. This Rhizobium johnstonii (strain DSM 114642 / LMG 32736 / 3841) (Rhizobium leguminosarum bv. viciae) protein is ATP-dependent Clp protease proteolytic subunit 1.